Here is a 345-residue protein sequence, read N- to C-terminus: Phosphoribosylformylglycinamidine cyclo-ligase (345 aa).

It belongs to the AIR synthase family.

Its subcellular location is the cytoplasm. The catalysed reaction is 2-formamido-N(1)-(5-O-phospho-beta-D-ribosyl)acetamidine + ATP = 5-amino-1-(5-phospho-beta-D-ribosyl)imidazole + ADP + phosphate + H(+). Its pathway is purine metabolism; IMP biosynthesis via de novo pathway; 5-amino-1-(5-phospho-D-ribosyl)imidazole from N(2)-formyl-N(1)-(5-phospho-D-ribosyl)glycinamide: step 2/2. The sequence is that of Phosphoribosylformylglycinamidine cyclo-ligase from Prochlorococcus marinus (strain MIT 9211).